The primary structure comprises 319 residues: Ferrochelatase (319 aa).

Fe cation is bound by residues histidine 192 and glutamate 271.

The protein belongs to the ferrochelatase family.

The protein resides in the cytoplasm. The catalysed reaction is heme b + 2 H(+) = protoporphyrin IX + Fe(2+). It participates in porphyrin-containing compound metabolism; protoheme biosynthesis; protoheme from protoporphyrin-IX: step 1/1. Functionally, catalyzes the ferrous insertion into protoporphyrin IX. The polypeptide is Ferrochelatase (Geotalea daltonii (strain DSM 22248 / JCM 15807 / FRC-32) (Geobacter daltonii)).